The chain runs to 199 residues: Recombination protein RecR (199 aa).

The C4-type zinc finger occupies 56 to 71 (CTVCFNVTEQETCNIC). In terms of domain architecture, Toprim spans 79–174 (SVICVVEESK…TVTRLASGLP (96 aa)).

Belongs to the RecR family.

Its function is as follows. May play a role in DNA repair. It seems to be involved in an RecBC-independent recombinational process of DNA repair. It may act with RecF and RecO. The protein is Recombination protein RecR of Paenarthrobacter aurescens (strain TC1).